Reading from the N-terminus, the 116-residue chain is Classical arabinogalactan protein 25 (116 aa).

The N-terminal stretch at 1–28 (MAFSFLNKLLIIFIFIFISLSSSSPTIS) is a signal peptide. The segment at 40–95 (LLPSPGDALPSDDGSGTIPSSPSPPDPDTNDGSYPDPLAFSPFASPPVSSPSPPPS) is disordered. Low complexity-rich tracts occupy residues 50–59 (SDDGSGTIPS) and 69–82 (NDGS…FSPF). Positions 83–95 (ASPPVSSPSPPPS) are enriched in pro residues. Ser-89 carries GPI-anchor amidated serine lipidation. Positions 90–116 (PSPPPSLPSAGVLLISLIISSASFLAL) are cleaved as a propeptide — removed in mature form.

It belongs to the classical AGP family. O-glycosylated on the hydroxyproline residues.

The protein localises to the cell membrane. Its function is as follows. Proteoglycan that seems to be implicated in diverse developmental roles such as differentiation, cell-cell recognition, embryogenesis and programmed cell death. In Arabidopsis thaliana (Mouse-ear cress), this protein is Classical arabinogalactan protein 25 (AGP25).